The following is a 465-amino-acid chain: tRNA (guanine(37)-N(1))-methyltransferase (465 aa).

The N-terminal 20 residues, 1–20, are a transit peptide targeting the mitochondrion; sequence MDKNSQLRDMNLFRAPAARA. Residues His238 and 304–305 contribute to the S-adenosyl-L-methionine site; that span reads DG. The tract at residues 326-345 is disordered; the sequence is AVIKPPRPPRKSAAPPPEPV. Residue Asn359 participates in S-adenosyl-L-methionine binding.

Belongs to the class I-like SAM-binding methyltransferase superfamily. TRM5/TYW2 family. Monomer.

The protein resides in the mitochondrion matrix. Its subcellular location is the nucleus. The protein localises to the cytoplasm. It catalyses the reaction guanosine(37) in tRNA + S-adenosyl-L-methionine = N(1)-methylguanosine(37) in tRNA + S-adenosyl-L-homocysteine + H(+). In terms of biological role, specifically methylates the N1 position of guanosine-37 in various cytoplasmic and mitochondrial tRNAs. Methylation is not dependent on the nature of the nucleoside 5' of the target nucleoside. This is the first step in the biosynthesis of wybutosine (yW), a modified base adjacent to the anticodon of tRNAs and required for accurate decoding. This is tRNA (guanine(37)-N(1))-methyltransferase from Fusarium vanettenii (strain ATCC MYA-4622 / CBS 123669 / FGSC 9596 / NRRL 45880 / 77-13-4) (Fusarium solani subsp. pisi).